Here is a 192-residue protein sequence, read N- to C-terminus: Probable apo-citrate lyase phosphoribosyl-dephospho-CoA transferase (192 aa).

Belongs to the CitX family.

The catalysed reaction is apo-[citrate lyase ACP] + 2'-(5''-triphospho-alpha-D-ribosyl)-3'-dephospho-CoA = holo-[citrate lyase ACP] + diphosphate. Transfers 2-(5''-triphosphoribosyl)-3'-dephosphocoenzyme-A on a serine residue to the apo-acyl carrier protein (gamma chain) of the citrate lyase to yield holo-acyl carrier protein. The sequence is that of Probable apo-citrate lyase phosphoribosyl-dephospho-CoA transferase from Streptococcus pyogenes serotype M18 (strain MGAS8232).